The following is a 283-amino-acid chain: Digeranylgeranylglyceryl phosphate synthase (283 aa).

8 helical membrane passes run 5–27 (VEII…AILA), 37–57 (AMLA…YFDY), 85–105 (LLFI…DTWI), 128–148 (PLIG…FAGY), 152–172 (EGLI…MTTA), 203–223 (AIIA…LYIY), 228–248 (INYL…AVLL), and 263–283 (LKTG…TITF).

It belongs to the UbiA prenyltransferase family. DGGGP synthase subfamily. Requires Mg(2+) as cofactor.

It localises to the cell membrane. It carries out the reaction sn-3-O-(geranylgeranyl)glycerol 1-phosphate + (2E,6E,10E)-geranylgeranyl diphosphate = 2,3-bis-O-(geranylgeranyl)-sn-glycerol 1-phosphate + diphosphate. Its pathway is membrane lipid metabolism; glycerophospholipid metabolism. Its function is as follows. Prenyltransferase that catalyzes the transfer of the geranylgeranyl moiety of geranylgeranyl diphosphate (GGPP) to the C2 hydroxyl of (S)-3-O-geranylgeranylglyceryl phosphate (GGGP). This reaction is the second ether-bond-formation step in the biosynthesis of archaeal membrane lipids. The sequence is that of Digeranylgeranylglyceryl phosphate synthase from Methanobrevibacter smithii (strain ATCC 35061 / DSM 861 / OCM 144 / PS).